We begin with the raw amino-acid sequence, 346 residues long: Phospholipase A1 (346 aa).

Residues 1 to 26 (MRKFAAIFVVFFVQCTHLYSLAQARA) form the signal peptide. Positions 27-37 (EPDPGVVEYLK) are excised as a propeptide. Residues Asn44 and Asn72 are each glycosylated (N-linked (GlcNAc...) asparagine). Catalysis depends on Ser167, which acts as the Nucleophile. The N-linked (GlcNAc...) asparagine glycan is linked to Asn185. Residues Asp195 and His258 each act as charge relay system in the active site.

It belongs to the AB hydrolase superfamily. Lipase family. In terms of processing, contains six disulfide bonds. N-glycosylated; contains mannose. In terms of tissue distribution, expressed by the venom gland.

It is found in the secreted. The enzyme catalyses a 1,2-diacyl-sn-glycero-3-phosphocholine + H2O = a 2-acyl-sn-glycero-3-phosphocholine + a fatty acid + H(+). Catalyzes the hydrolysis of phosphatidylcholine with phospholipase A1 activity. Induces hemolytic activity. Acts as an allergen. In Solenopsis invicta (Red imported fire ant), this protein is Phospholipase A1.